We begin with the raw amino-acid sequence, 465 residues long: ATP-dependent protease ATPase subunit HslU (465 aa).

ATP contacts are provided by residues valine 18, 60-65 (GVGKTE), aspartate 277, glutamate 342, and arginine 414.

Belongs to the ClpX chaperone family. HslU subfamily. A double ring-shaped homohexamer of HslV is capped on each side by a ring-shaped HslU homohexamer. The assembly of the HslU/HslV complex is dependent on binding of ATP.

The protein resides in the cytoplasm. ATPase subunit of a proteasome-like degradation complex; this subunit has chaperone activity. The binding of ATP and its subsequent hydrolysis by HslU are essential for unfolding of protein substrates subsequently hydrolyzed by HslV. HslU recognizes the N-terminal part of its protein substrates and unfolds these before they are guided to HslV for hydrolysis. This is ATP-dependent protease ATPase subunit HslU from Caldicellulosiruptor saccharolyticus (strain ATCC 43494 / DSM 8903 / Tp8T 6331).